Here is a 152-residue protein sequence, read N- to C-terminus: MASVNYPSSFDKKDEFEDMSILDKIWFRCKQQPLVPIGCLATCVAVALAAKGVRTGDRVNAQKWFRWRVGLQGLTLVALVGGSYIYDRQQVTQRKTDEDLAREKAQHRQDLWIQELERRDQETKRNKERARLARARLEAERSTGILDDEPPK.

The region spanning 6–97 (YPSSFDKKDE…RQQVTQRKTD (92 aa)) is the HIG1 domain. The next 2 helical transmembrane spans lie at 34–50 (LVPIGCLATCVAVALAA) and 64–86 (WFRWRVGLQGLTLVALVGGSYIY). Residues 113-143 (IQELERRDQETKRNKERARLARARLEAERST) adopt a coiled-coil conformation.

This sequence belongs to the RCF1 family. As to quaternary structure, associates with the respiratory chain complex III/complex IV supercomplex.

The protein localises to the mitochondrion membrane. Cytochrome c oxidase subunit which plays a role in assembly of respiratory supercomplexes. This Komagataella phaffii (strain GS115 / ATCC 20864) (Yeast) protein is Respiratory supercomplex factor 1, mitochondrial (RCF1).